The sequence spans 406 residues: Tyrosine-specific transport system 2 (406 aa).

Transmembrane regions (helical) follow at residues F7 to L27, L38 to V58, I83 to G103, A119 to V139, V150 to V170, A183 to A203, A219 to H239, V279 to G299, F314 to G334, F335 to I355, and N376 to I396.

This sequence belongs to the amino acid/polyamine transporter 2 family. Mtr/TnaB/TyrP permease subfamily.

The protein resides in the cell inner membrane. It catalyses the reaction L-tyrosine(in) + H(+)(in) = L-tyrosine(out) + H(+)(out). In terms of biological role, transports tyrosine across the cytoplasmic membrane. The transport system is energized by the proton motive force. This is Tyrosine-specific transport system 2 (tyrP-B) from Haemophilus influenzae (strain ATCC 51907 / DSM 11121 / KW20 / Rd).